The sequence spans 647 residues: Protein cueball (647 aa).

An N-terminal signal peptide occupies residues 1 to 22 (MLWCPSVLVPLIAVAACLPVLA). Residues 23–534 (IGTPLEWEFA…CMTPSPWTSN (512 aa)) lie on the Extracellular side of the membrane. Residues asparagine 80 and asparagine 106 are each glycosylated (N-linked (GlcNAc...) asparagine). 3 LDL-receptor class B repeats span residues 119-166 (RNLF…DVCR), 167-211 (RKLY…DQLS), and 212-257 (DRIF…TNDA). Asparagine 175 is a glycosylation site (N-linked (GlcNAc...) asparagine). Asparagine 316 is a glycosylation site (N-linked (GlcNAc...) asparagine). EGF-like domains lie at 365 to 401 (DEKTAQLERDHCLNGGTYIADRVLCICPTGFKGSRCE) and 436 to 473 (EISKCSGLCLNGGHCKLEDISEKPSCECPHNFAGERCE). Intrachain disulfides connect cysteine 376–cysteine 389, cysteine 391–cysteine 400, cysteine 440–cysteine 450, cysteine 444–cysteine 461, and cysteine 463–cysteine 472. N-linked (GlcNAc...) asparagine glycosylation occurs at asparagine 475. A helical transmembrane segment spans residues 535–555 (VIIVLVLGIVSCFFLVAVIVH). Residues 556–647 (GFRRLYKPKR…LIHNMDDDLY (92 aa)) lie on the Cytoplasmic side of the membrane.

It belongs to the cueball family.

It localises to the cell membrane. In terms of biological role, has a role in spermatogenesis and oogenesis. In Drosophila persimilis (Fruit fly), this protein is Protein cueball.